A 395-amino-acid polypeptide reads, in one-letter code: Protein NDRG1 (395 aa).

A disordered region spans residues 325–395 (RSRTGSAASS…NTPKSMEISC (71 aa)). Low complexity predominate over residues 326–339 (SRTGSAASSSSQDG). Repeat copies occupy residues 339–348 (GNRSRSHTNE), 349–358 (GSRSRSHTGD), 359–368 (GNRSRAHTGD), and 369–378 (GNRSRSHTDS). The interval 339-378 (GNRSRSHTNEGSRSRSHTGDGNRSRAHTGDGNRSRSHTDS) is 4 X 10 AA tandem repeats of G-[NS]-R-S-R-[AS]-H-T-[DGN]-[DES]. Positions 345 to 376 (HTNEGSRSRSHTGDGNRSRAHTGDGNRSRSHT) are enriched in basic and acidic residues. Residues 377–389 (DSNNTNSEHNTPK) show a composition bias toward polar residues.

This sequence belongs to the NDRG family.

May be involved in pronephros development, after specification of the pronephros. In Xenopus tropicalis (Western clawed frog), this protein is Protein NDRG1.